The primary structure comprises 599 residues: Glutamine--fructose-6-phosphate aminotransferase [isomerizing] (599 aa).

C2 functions as the Nucleophile; for GATase activity in the catalytic mechanism. Residues 2–223 enclose the Glutamine amidotransferase type-2 domain; sequence CGIIGYIGNE…DRDIVILRKE (222 aa). 2 SIS domains span residues 286–423 and 452–589; these read LGKE…IIGK and IAEE…VDKP. Residue K594 is the For Fru-6P isomerization activity of the active site.

Homodimer.

The protein localises to the cytoplasm. It carries out the reaction D-fructose 6-phosphate + L-glutamine = D-glucosamine 6-phosphate + L-glutamate. Catalyzes the first step in hexosamine metabolism, converting fructose-6P into glucosamine-6P using glutamine as a nitrogen source. The protein is Glutamine--fructose-6-phosphate aminotransferase [isomerizing] (glmS) of Methanococcus maripaludis (strain DSM 14266 / JCM 13030 / NBRC 101832 / S2 / LL).